The sequence spans 668 residues: UvrABC system protein B (668 aa).

One can recognise a Helicase ATP-binding domain in the interval 25-170 (NSILLGNKYQ…FVGQKISIKE (146 aa)). Position 38–45 (38–45 (GVTGSGKT)) interacts with ATP. A Beta-hairpin motif is present at residues 91 to 114 (YYDYYQPESYVPSKDLFIEKEATI). The 167-residue stretch at 429–595 (QMEDLYSEIQ…TIVKKIQNIL (167 aa)) folds into the Helicase C-terminal domain. The region spanning 622 to 657 (KKLIDKLKFDLEEAVNDERFEDAIVLRDKIKELSSK) is the UVR domain.

It belongs to the UvrB family. In terms of assembly, forms a heterotetramer with UvrA during the search for lesions. Interacts with UvrC in an incision complex.

The protein resides in the cytoplasm. The UvrABC repair system catalyzes the recognition and processing of DNA lesions. A damage recognition complex composed of 2 UvrA and 2 UvrB subunits scans DNA for abnormalities. Upon binding of the UvrA(2)B(2) complex to a putative damaged site, the DNA wraps around one UvrB monomer. DNA wrap is dependent on ATP binding by UvrB and probably causes local melting of the DNA helix, facilitating insertion of UvrB beta-hairpin between the DNA strands. Then UvrB probes one DNA strand for the presence of a lesion. If a lesion is found the UvrA subunits dissociate and the UvrB-DNA preincision complex is formed. This complex is subsequently bound by UvrC and the second UvrB is released. If no lesion is found, the DNA wraps around the other UvrB subunit that will check the other stand for damage. This Borreliella burgdorferi (strain ZS7) (Borrelia burgdorferi) protein is UvrABC system protein B.